Reading from the N-terminus, the 112-residue chain is MENRFEISMLIDYYGTLLTEKQFNVMTLYYNEDLSLAEIAEINKTSRQAIYDLIKRCSKQLHSYDEKLKLSKKVDKRYRIKEELMAELNKNSNLDENIKKYIDEKLEEIINA.

It belongs to the UPF0122 family.

In terms of biological role, might take part in the signal recognition particle (SRP) pathway. This is inferred from the conservation of its genetic proximity to ftsY/ffh. May be a regulatory protein. The sequence is that of UPF0122 protein CPE1714 from Clostridium perfringens (strain 13 / Type A).